The chain runs to 860 residues: Probable inorganic carbon transporter subunit DabA (860 aa).

Positions 1–32 (MTTTSLGADAAHTHAMVPSAIPPEGSDAAGPD) are disordered. 4 residues coordinate Zn(2+): Cys-369, Asp-371, His-551, and Cys-566.

It belongs to the inorganic carbon transporter (TC 9.A.2) DabA family. In terms of assembly, forms a complex with DabB. The cofactor is Zn(2+).

It is found in the cell inner membrane. In terms of biological role, part of an energy-coupled inorganic carbon pump. This chain is Probable inorganic carbon transporter subunit DabA, found in Ralstonia pickettii (strain 12D).